The chain runs to 121 residues: Phosphoribosyl-ATP pyrophosphatase (121 aa).

This sequence belongs to the PRA-PH family.

It localises to the cytoplasm. The enzyme catalyses 1-(5-phospho-beta-D-ribosyl)-ATP + H2O = 1-(5-phospho-beta-D-ribosyl)-5'-AMP + diphosphate + H(+). It functions in the pathway amino-acid biosynthesis; L-histidine biosynthesis; L-histidine from 5-phospho-alpha-D-ribose 1-diphosphate: step 2/9. The protein is Phosphoribosyl-ATP pyrophosphatase of Burkholderia cenocepacia (strain HI2424).